The primary structure comprises 669 residues: UvrABC system protein B (669 aa).

The Helicase ATP-binding domain maps to 26-183 (EGLEDGLAHQ…RRLADLQYTR (158 aa)). ATP is bound at residue 39–46 (GVTGSGKT). The Beta-hairpin signature appears at 92–115 (YYDYYQPEAYVPSSDTFIEKDASV). Positions 431–593 (QVDDLLSEIR…IVPKGLNKKI (163 aa)) constitute a Helicase C-terminal domain. In terms of domain architecture, UVR spans 629 to 664 (EKEIQRLETEMYQHAKDLEFEKAAQTRDKLQTLRAQ).

Belongs to the UvrB family. Forms a heterotetramer with UvrA during the search for lesions. Interacts with UvrC in an incision complex.

Its subcellular location is the cytoplasm. Functionally, the UvrABC repair system catalyzes the recognition and processing of DNA lesions. A damage recognition complex composed of 2 UvrA and 2 UvrB subunits scans DNA for abnormalities. Upon binding of the UvrA(2)B(2) complex to a putative damaged site, the DNA wraps around one UvrB monomer. DNA wrap is dependent on ATP binding by UvrB and probably causes local melting of the DNA helix, facilitating insertion of UvrB beta-hairpin between the DNA strands. Then UvrB probes one DNA strand for the presence of a lesion. If a lesion is found the UvrA subunits dissociate and the UvrB-DNA preincision complex is formed. This complex is subsequently bound by UvrC and the second UvrB is released. If no lesion is found, the DNA wraps around the other UvrB subunit that will check the other stand for damage. In Proteus mirabilis (strain HI4320), this protein is UvrABC system protein B.